A 475-amino-acid chain; its full sequence is ATP synthase subunit beta, chloroplastic (475 aa).

Residue 156-163 (GGAGVGKT) coordinates ATP.

This sequence belongs to the ATPase alpha/beta chains family. F-type ATPases have 2 components, CF(1) - the catalytic core - and CF(0) - the membrane proton channel. CF(1) has five subunits: alpha(3), beta(3), gamma(1), delta(1), epsilon(1). CF(0) has four main subunits: a(1), b(1), b'(1) and c(9-12).

It is found in the plastid. The protein resides in the chloroplast thylakoid membrane. The catalysed reaction is ATP + H2O + 4 H(+)(in) = ADP + phosphate + 5 H(+)(out). Its function is as follows. Produces ATP from ADP in the presence of a proton gradient across the membrane. The catalytic sites are hosted primarily by the beta subunits. The protein is ATP synthase subunit beta, chloroplastic of Phaeodactylum tricornutum (strain CCAP 1055/1).